Here is a 252-residue protein sequence, read N- to C-terminus: dITP/XTP pyrophosphatase (252 aa).

Position 7–12 (7–12 (THNEGK)) interacts with substrate. The active-site Proton acceptor is Asp-74. Asp-74 serves as a coordination point for Mg(2+). Residues Ser-75 and 193–196 (FGYD) each bind substrate. The tract at residues 201-224 (PDDQPAGRVSTEPDHEGEPLTSAE) is disordered. Substrate contacts are provided by residues Lys-230 and 235–236 (HR).

This sequence belongs to the HAM1 NTPase family. Homodimer. Requires Mg(2+) as cofactor.

It carries out the reaction XTP + H2O = XMP + diphosphate + H(+). It catalyses the reaction dITP + H2O = dIMP + diphosphate + H(+). The enzyme catalyses ITP + H2O = IMP + diphosphate + H(+). Its function is as follows. Pyrophosphatase that catalyzes the hydrolysis of nucleoside triphosphates to their monophosphate derivatives, with a high preference for the non-canonical purine nucleotides XTP (xanthosine triphosphate), dITP (deoxyinosine triphosphate) and ITP. Seems to function as a house-cleaning enzyme that removes non-canonical purine nucleotides from the nucleotide pool, thus preventing their incorporation into DNA/RNA and avoiding chromosomal lesions. This is dITP/XTP pyrophosphatase from Bifidobacterium longum subsp. infantis (strain ATCC 15697 / DSM 20088 / JCM 1222 / NCTC 11817 / S12).